The sequence spans 166 residues: Protein-export protein SecB (166 aa).

Belongs to the SecB family. Homotetramer, a dimer of dimers. One homotetramer interacts with 1 SecA dimer.

Its subcellular location is the cytoplasm. One of the proteins required for the normal export of preproteins out of the cell cytoplasm. It is a molecular chaperone that binds to a subset of precursor proteins, maintaining them in a translocation-competent state. It also specifically binds to its receptor SecA. This is Protein-export protein SecB from Acidiphilium cryptum (strain JF-5).